A 347-amino-acid polypeptide reads, in one-letter code: Anthranilate phosphoribosyltransferase (347 aa).

Residues G86, 89 to 90 (GD), T94, 96 to 99 (NIST), 114 to 122 (KHGNRSVSS), and S126 contribute to the 5-phospho-alpha-D-ribose 1-diphosphate site. G86 serves as a coordination point for anthranilate. Position 98 (S98) interacts with Mg(2+). N117 contacts anthranilate. R172 is an anthranilate binding site. Mg(2+) contacts are provided by D230 and E231.

It belongs to the anthranilate phosphoribosyltransferase family. In terms of assembly, homodimer. It depends on Mg(2+) as a cofactor.

It catalyses the reaction N-(5-phospho-beta-D-ribosyl)anthranilate + diphosphate = 5-phospho-alpha-D-ribose 1-diphosphate + anthranilate. It functions in the pathway amino-acid biosynthesis; L-tryptophan biosynthesis; L-tryptophan from chorismate: step 2/5. Catalyzes the transfer of the phosphoribosyl group of 5-phosphorylribose-1-pyrophosphate (PRPP) to anthranilate to yield N-(5'-phosphoribosyl)-anthranilate (PRA). The sequence is that of Anthranilate phosphoribosyltransferase from Shewanella frigidimarina (strain NCIMB 400).